Here is a 358-residue protein sequence, read N- to C-terminus: Magnesium-protoporphyrin IX monomethyl ester [oxidative] cyclase 2 (358 aa).

Belongs to the AcsF family. The cofactor is Fe cation.

The enzyme catalyses Mg-protoporphyrin IX 13-monomethyl ester + 3 NADPH + 3 O2 + 2 H(+) = 3,8-divinyl protochlorophyllide a + 3 NADP(+) + 5 H2O. It participates in porphyrin-containing compound metabolism; chlorophyll biosynthesis (light-independent). In terms of biological role, catalyzes the formation of the isocyclic ring in chlorophyll biosynthesis. Mediates the cyclase reaction, which results in the formation of divinylprotochlorophyllide (Pchlide) characteristic of all chlorophylls from magnesium-protoporphyrin IX 13-monomethyl ester (MgPMME). In Synechocystis sp. (strain ATCC 27184 / PCC 6803 / Kazusa), this protein is Magnesium-protoporphyrin IX monomethyl ester [oxidative] cyclase 2.